The following is a 405-amino-acid chain: Maintenance of mitochondrial morphology protein 1 (405 aa).

The Lumenal segment spans residues 1–86 (MQVLNFYVNP…TGSTKSFTQG (86 aa)). The chain crosses the membrane as a helical span at residues 87–107 (LIIGQLSVIILLGIFIKFFVF). Over 108–405 (ADSSTTSSTS…QPVSTTESDH (298 aa)) the chain is Cytoplasmic. The SMP-LTD domain maps to 166–385 (APESLDWFNV…EPRFQVVKLP (220 aa)). The disordered stretch occupies residues 303 to 324 (SEPRVAMDSPQSTRDDNSEEPN).

It belongs to the MMM1 family. Homodimer. Component of the ER-mitochondria encounter structure (ERMES) or MDM complex, composed of MMM1, MDM10, MDM12 and MDM34. An MMM1 homodimer associates with one molecule of MDM12 on each side in a pairwise head-to-tail manner, and the SMP-LTD domains of MMM1 and MDM12 generate a continuous hydrophobic tunnel for phospholipid trafficking.

It is found in the endoplasmic reticulum membrane. In terms of biological role, component of the ERMES/MDM complex, which serves as a molecular tether to connect the endoplasmic reticulum (ER) and mitochondria. Components of this complex are involved in the control of mitochondrial shape and protein biogenesis, and function in nonvesicular lipid trafficking between the ER and mitochondria. The MDM12-MMM1 subcomplex functions in the major beta-barrel assembly pathway that is responsible for biogenesis of all outer membrane beta-barrel proteins, and acts in a late step after the SAM complex. The MDM10-MDM12-MMM1 subcomplex further acts in the TOM40-specific pathway after the action of the MDM12-MMM1 complex. Essential for establishing and maintaining the structure of mitochondria and maintenance of mtDNA nucleoids. This chain is Maintenance of mitochondrial morphology protein 1, found in Meyerozyma guilliermondii (strain ATCC 6260 / CBS 566 / DSM 6381 / JCM 1539 / NBRC 10279 / NRRL Y-324) (Yeast).